We begin with the raw amino-acid sequence, 668 residues long: MDKEAAKRRIEELHEILNQYNYEYHTLDRPSVPDAEYDARMRELISLEEEHPDLKAADSPSQRVGGAVLDAFQKVRHGTPMLSLGNAFNEQDLLDFDRRVRQAVGDDIAYNVELKIDGLAVSLRYENGVFVRGATRGDGTTGEDITENLKTIRSIPLKIKRPLSIEVRGEAFMPKPSFEALNEKRLQNEEEPFANPRNAAAGSLRQLDTKIAAKRNLDIFVYSIAELDEIGVESQSEGLDLLDELGFKTNKERRTCQTIEEVIELIETLKTKRADFSYEIDGIVIKVDSLAQQEELGFTAKSPRWAVAYKFPAEEVVTKLLDIELSVGRTGVITPTAILEPVKVAGTTVQRASLHNEDLIKEKDIRLLDQVIVKKAGDIIPEVAGVLIDQRTGEEKPFHMPTECPECHSELVRIEGEVALRCINPECPAQIREGLIHFVSRNAMNIDGLGERVITQLFKEQLVSRVSDLYRLTKEELIQLERMGEKSVENLLRSIEQSKENSLERLLFGLGIRFIGSKAAKTLALHFGDIDQLKQATKEQLLEVDEIGEKMADAVVTYFEKEEILNLLNELKELGVNMTYTGPKPVKVEESDSYFAGKTIVLTGKLEEMARNDAKAAIEALGGKLAGSVSKKTDLVIAGEAAGSKLTKAEELNIEIWDEVKMLEELKK.

NAD(+) contacts are provided by residues 34-38 (DAEYD), 83-84 (SL), and glutamate 113. Lysine 115 (N6-AMP-lysine intermediate) is an active-site residue. Positions 136, 170, 286, and 310 each coordinate NAD(+). The Zn(2+) site is built by cysteine 404, cysteine 407, cysteine 422, and cysteine 427. In terms of domain architecture, BRCT spans 590–668 (ESDSYFAGKT…EVKMLEELKK (79 aa)).

The protein belongs to the NAD-dependent DNA ligase family. LigA subfamily. Mg(2+) serves as cofactor. The cofactor is Mn(2+).

The catalysed reaction is NAD(+) + (deoxyribonucleotide)n-3'-hydroxyl + 5'-phospho-(deoxyribonucleotide)m = (deoxyribonucleotide)n+m + AMP + beta-nicotinamide D-nucleotide.. Its function is as follows. DNA ligase that catalyzes the formation of phosphodiester linkages between 5'-phosphoryl and 3'-hydroxyl groups in double-stranded DNA using NAD as a coenzyme and as the energy source for the reaction. It is essential for DNA replication and repair of damaged DNA. The sequence is that of DNA ligase from Bacillus pumilus (strain SAFR-032).